Consider the following 156-residue polypeptide: Cyanate hydratase (156 aa).

Catalysis depends on residues R96, E99, and S122.

The protein belongs to the cyanase family.

It carries out the reaction cyanate + hydrogencarbonate + 3 H(+) = NH4(+) + 2 CO2. Functionally, catalyzes the reaction of cyanate with bicarbonate to produce ammonia and carbon dioxide. This is Cyanate hydratase from Escherichia coli O9:H4 (strain HS).